Reading from the N-terminus, the 201-residue chain is 3-isopropylmalate dehydratase small subunit (201 aa).

It belongs to the LeuD family. LeuD type 1 subfamily. In terms of assembly, heterodimer of LeuC and LeuD.

It carries out the reaction (2R,3S)-3-isopropylmalate = (2S)-2-isopropylmalate. It functions in the pathway amino-acid biosynthesis; L-leucine biosynthesis; L-leucine from 3-methyl-2-oxobutanoate: step 2/4. Catalyzes the isomerization between 2-isopropylmalate and 3-isopropylmalate, via the formation of 2-isopropylmaleate. This chain is 3-isopropylmalate dehydratase small subunit, found in Paracoccus denitrificans (strain Pd 1222).